Consider the following 283-residue polypeptide: Tryptophan 2,3-dioxygenase (283 aa).

Residues 52–56 (FIIQH), Tyr114, and Arg118 each bind substrate. His241 is a binding site for heme. Thr255 contributes to the substrate binding site.

It belongs to the tryptophan 2,3-dioxygenase family. As to quaternary structure, homotetramer. Heme serves as cofactor.

The enzyme catalyses L-tryptophan + O2 = N-formyl-L-kynurenine. Its pathway is amino-acid degradation; L-tryptophan degradation via kynurenine pathway; L-kynurenine from L-tryptophan: step 1/2. In terms of biological role, heme-dependent dioxygenase that catalyzes the oxidative cleavage of the L-tryptophan (L-Trp) pyrrole ring and converts L-tryptophan to N-formyl-L-kynurenine. Catalyzes the oxidative cleavage of the indole moiety. This chain is Tryptophan 2,3-dioxygenase, found in Pseudomonas fluorescens (strain ATCC BAA-477 / NRRL B-23932 / Pf-5).